The sequence spans 435 residues: Bifunctional protein GlmU (435 aa).

Residues 1-224 form a pyrophosphorylase region; the sequence is MNDTSIIILA…EQNFMGINDK (224 aa). UDP-N-acetyl-alpha-D-glucosamine is bound by residues 9 to 12, Lys-23, Gln-75, and 82 to 83; these read LAAG and GT. Residue Asp-103 coordinates Mg(2+). Positions 136, 150, 165, and 222 each coordinate UDP-N-acetyl-alpha-D-glucosamine. A Mg(2+)-binding site is contributed by Asn-222. Positions 225 to 245 are linker; the sequence is FQLSVAEKIMQDEIKQDLMKA. Residues 246–435 form an N-acetyltransferase region; sequence GVLMRLPESI…KFFGKNNAEK (190 aa). UDP-N-acetyl-alpha-D-glucosamine contacts are provided by Arg-309 and Lys-326. The active-site Proton acceptor is His-337. Tyr-340 and Asn-351 together coordinate UDP-N-acetyl-alpha-D-glucosamine. Acetyl-CoA-binding positions include 360 to 361, Ser-379, Ala-397, and Arg-414; that span reads NY.

In the N-terminal section; belongs to the N-acetylglucosamine-1-phosphate uridyltransferase family. It in the C-terminal section; belongs to the transferase hexapeptide repeat family. Homotrimer. Mg(2+) is required as a cofactor.

It is found in the cytoplasm. It catalyses the reaction alpha-D-glucosamine 1-phosphate + acetyl-CoA = N-acetyl-alpha-D-glucosamine 1-phosphate + CoA + H(+). It carries out the reaction N-acetyl-alpha-D-glucosamine 1-phosphate + UTP + H(+) = UDP-N-acetyl-alpha-D-glucosamine + diphosphate. It functions in the pathway nucleotide-sugar biosynthesis; UDP-N-acetyl-alpha-D-glucosamine biosynthesis; N-acetyl-alpha-D-glucosamine 1-phosphate from alpha-D-glucosamine 6-phosphate (route II): step 2/2. It participates in nucleotide-sugar biosynthesis; UDP-N-acetyl-alpha-D-glucosamine biosynthesis; UDP-N-acetyl-alpha-D-glucosamine from N-acetyl-alpha-D-glucosamine 1-phosphate: step 1/1. The protein operates within bacterial outer membrane biogenesis; LPS lipid A biosynthesis. Catalyzes the last two sequential reactions in the de novo biosynthetic pathway for UDP-N-acetylglucosamine (UDP-GlcNAc). The C-terminal domain catalyzes the transfer of acetyl group from acetyl coenzyme A to glucosamine-1-phosphate (GlcN-1-P) to produce N-acetylglucosamine-1-phosphate (GlcNAc-1-P), which is converted into UDP-GlcNAc by the transfer of uridine 5-monophosphate (from uridine 5-triphosphate), a reaction catalyzed by the N-terminal domain. The polypeptide is Bifunctional protein GlmU (Campylobacter curvus (strain 525.92)).